The primary structure comprises 130 residues: Large ribosomal subunit protein bL12 (130 aa).

A disordered region spans residues 94–114 (MTEGLPKTVKEKTSKSDAEDT).

The protein belongs to the bacterial ribosomal protein bL12 family. Homodimer. Part of the ribosomal stalk of the 50S ribosomal subunit. Forms a multimeric L10(L12)X complex, where L10 forms an elongated spine to which 2 to 4 L12 dimers bind in a sequential fashion. Binds GTP-bound translation factors.

Forms part of the ribosomal stalk which helps the ribosome interact with GTP-bound translation factors. Is thus essential for accurate translation. The sequence is that of Large ribosomal subunit protein bL12 from Chlamydia caviae (strain ATCC VR-813 / DSM 19441 / 03DC25 / GPIC) (Chlamydophila caviae).